Reading from the N-terminus, the 107-residue chain is Nucleoid-associated protein Rru_A3472 (107 aa).

Belongs to the YbaB/EbfC family. In terms of assembly, homodimer.

The protein localises to the cytoplasm. It localises to the nucleoid. Functionally, binds to DNA and alters its conformation. May be involved in regulation of gene expression, nucleoid organization and DNA protection. The protein is Nucleoid-associated protein Rru_A3472 of Rhodospirillum rubrum (strain ATCC 11170 / ATH 1.1.1 / DSM 467 / LMG 4362 / NCIMB 8255 / S1).